A 417-amino-acid chain; its full sequence is Solanesyl diphosphate synthase 2, chloroplastic (417 aa).

Residues 1–60 constitute a chloroplast transit peptide; that stretch reads MMMSCRNIDLGTSVLDHSCSSSSTSRRFLFGNSSKTVCMIGGRSCVGNLVFLRRDLATCR. Lysine 137, arginine 140, and histidine 175 together coordinate isopentenyl diphosphate. Mg(2+) contacts are provided by aspartate 182 and aspartate 186. Position 191 (arginine 191) interacts with an all-trans-polyprenyl diphosphate. Arginine 192 provides a ligand contact to isopentenyl diphosphate. An all-trans-polyprenyl diphosphate-binding residues include lysine 268, threonine 269, glutamine 306, and lysine 323.

Belongs to the FPP/GGPP synthase family. In terms of assembly, homodimer. Interacts with FBN5. The cofactor is Mg(2+). In terms of tissue distribution, higher expression in leaves than in roots.

It is found in the plastid. The protein resides in the chloroplast. It catalyses the reaction 5 isopentenyl diphosphate + (2E,6E,10E)-geranylgeranyl diphosphate = all-trans-nonaprenyl diphosphate + 5 diphosphate. Its function is as follows. Involved in providing solanesyl diphosphate for plastoquinone-9 (PQ-9) formation in plastids. Catalyzes the elongation of the prenyl side chain of PQ-9 in plastids. Contributes to the biosynthesis of plastochromanol-8 (PC-8) in plastids. Does not contribute to the synthesis of tocopherol or ubiquinone. PQ-9 and PC-8 are lipophilic antioxidants that act as protectant against photooxidative stress under high light stress conditions. Prefers geranylgeranyl diphosphate to farnesyl diphosphate as substrate. No activity with geranyl diphosphate or dimethylallyl diphosphate as substrate. The protein is Solanesyl diphosphate synthase 2, chloroplastic of Arabidopsis thaliana (Mouse-ear cress).